The primary structure comprises 416 residues: 3-isopropylmalate dehydratase large subunit (416 aa).

3 residues coordinate [4Fe-4S] cluster: Cys299, Cys357, and Cys360.

It belongs to the aconitase/IPM isomerase family. LeuC type 2 subfamily. In terms of assembly, heterodimer of LeuC and LeuD. [4Fe-4S] cluster is required as a cofactor.

The catalysed reaction is (2R,3S)-3-isopropylmalate = (2S)-2-isopropylmalate. It participates in amino-acid biosynthesis; L-leucine biosynthesis; L-leucine from 3-methyl-2-oxobutanoate: step 2/4. Catalyzes the isomerization between 2-isopropylmalate and 3-isopropylmalate, via the formation of 2-isopropylmaleate. The protein is 3-isopropylmalate dehydratase large subunit of Saccharolobus solfataricus (strain ATCC 35092 / DSM 1617 / JCM 11322 / P2) (Sulfolobus solfataricus).